Here is a 443-residue protein sequence, read N- to C-terminus: Tol-Pal system protein TolB (443 aa).

Positions M1–A33 are cleaved as a signal peptide.

The protein belongs to the TolB family. As to quaternary structure, the Tol-Pal system is composed of five core proteins: the inner membrane proteins TolA, TolQ and TolR, the periplasmic protein TolB and the outer membrane protein Pal. They form a network linking the inner and outer membranes and the peptidoglycan layer.

It localises to the periplasm. Its function is as follows. Part of the Tol-Pal system, which plays a role in outer membrane invagination during cell division and is important for maintaining outer membrane integrity. The sequence is that of Tol-Pal system protein TolB from Brucella anthropi (strain ATCC 49188 / DSM 6882 / CCUG 24695 / JCM 21032 / LMG 3331 / NBRC 15819 / NCTC 12168 / Alc 37) (Ochrobactrum anthropi).